A 215-amino-acid polypeptide reads, in one-letter code: Oligoribonuclease (215 aa).

Residues 5-170 (LVWIDCEMTG…ADIHESIREL (166 aa)) enclose the Exonuclease domain. The active site involves Tyr127. Positions 196–215 (LDEGKDAPGPSDSASAPPTG) are disordered. Low complexity predominate over residues 202–215 (APGPSDSASAPPTG).

Belongs to the oligoribonuclease family.

The protein localises to the cytoplasm. In terms of biological role, 3'-to-5' exoribonuclease specific for small oligoribonucleotides. In Mycobacterium avium (strain 104), this protein is Oligoribonuclease.